We begin with the raw amino-acid sequence, 101 residues long: Small ribosomal subunit protein uS14 (101 aa).

Belongs to the universal ribosomal protein uS14 family. In terms of assembly, part of the 30S ribosomal subunit. Contacts proteins S3 and S10.

In terms of biological role, binds 16S rRNA, required for the assembly of 30S particles and may also be responsible for determining the conformation of the 16S rRNA at the A site. The polypeptide is Small ribosomal subunit protein uS14 (Paramagnetospirillum magneticum (strain ATCC 700264 / AMB-1) (Magnetospirillum magneticum)).